Consider the following 890-residue polypeptide: Bacteriocin BCN5 (890 aa).

SH3b domains are found at residues 22–84 (PPNA…TNAT) and 179–241 (ENNA…TNAT). In terms of domain architecture, Peptidase M14 spans 303-549 (GYVKYEGAAA…RYLQKIINAV (247 aa)). Positions 358, 361, and 475 each coordinate Zn(2+). Glu-525 functions as the Proton donor/acceptor in the catalytic mechanism. The region spanning 572-636 (EATGEVINVQ…VNSGYIIILK (65 aa)) is the SH3b 3 domain. The hydrophobic stretch occupies residues 815-869 (KALAAAVIVNGVETMFCAFLGGFIAQCIAPEFPIVAAVAGAIVSAIAAFAIGYFV).

Zn(2+) serves as cofactor.

Functionally, may function as an ionophore. This is Bacteriocin BCN5 (bcn) from Clostridium perfringens.